We begin with the raw amino-acid sequence, 100 residues long: Ubiquitin-related modifier 1 homolog (100 aa).

1-thioglycine is present on Gly-100. Gly-100 participates in a covalent cross-link: Glycyl lysine isopeptide (Gly-Lys) (interchain with K-? in acceptor proteins).

This sequence belongs to the URM1 family. In terms of assembly, interacts with cer. In terms of processing, C-terminal thiocarboxylation occurs in 2 steps, it is first acyl-adenylated (-COAMP) via the hesA/moeB/thiF part of the MOCS3 homolog, then thiocarboxylated (-COSH) via the rhodanese domain of the MOCS3 homolog.

It is found in the cytoplasm. It functions in the pathway tRNA modification; 5-methoxycarbonylmethyl-2-thiouridine-tRNA biosynthesis. In terms of biological role, acts as a sulfur carrier required for 2-thiolation of mcm(5)S(2)U at tRNA wobble positions of cytosolic tRNA(Lys), tRNA(Glu) and tRNA(Gln). Serves as sulfur donor in tRNA 2-thiolation reaction by being thiocarboxylated (-COSH) at its C-terminus by MOCS3. The sulfur is then transferred to tRNA to form 2-thiolation of mcm(5)S(2)U. Also acts as a ubiquitin-like protein (UBL) that is covalently conjugated via an isopeptide bond to lysine residues of target proteins such as Prx2/Jafrac1, Ciao1, Eip71CD and GILT1. The thiocarboxylated form serves as substrate for conjugation and oxidative stress specifically induces the formation of UBL-protein conjugates. This is Ubiquitin-related modifier 1 homolog from Drosophila willistoni (Fruit fly).